Here is a 103-residue protein sequence, read N- to C-terminus: Small ribosomal subunit protein uS10 (103 aa).

This sequence belongs to the universal ribosomal protein uS10 family. As to quaternary structure, part of the 30S ribosomal subunit.

Its function is as follows. Involved in the binding of tRNA to the ribosomes. This Korarchaeum cryptofilum (strain OPF8) protein is Small ribosomal subunit protein uS10.